The sequence spans 92 residues: Small ribosomal subunit protein uS19c (92 aa).

This sequence belongs to the universal ribosomal protein uS19 family.

Its subcellular location is the plastid. It is found in the chloroplast. Functionally, protein S19 forms a complex with S13 that binds strongly to the 16S ribosomal RNA. This is Small ribosomal subunit protein uS19c from Phaseolus angularis (Azuki bean).